The chain runs to 354 residues: Protein RecA (354 aa).

An ATP-binding site is contributed by 67–74; it reads GPESSGKT.

It belongs to the RecA family.

It localises to the cytoplasm. In terms of biological role, can catalyze the hydrolysis of ATP in the presence of single-stranded DNA, the ATP-dependent uptake of single-stranded DNA by duplex DNA, and the ATP-dependent hybridization of homologous single-stranded DNAs. It interacts with LexA causing its activation and leading to its autocatalytic cleavage. The sequence is that of Protein RecA from Pasteurella multocida (strain Pm70).